A 232-amino-acid chain; its full sequence is Floral homeotic protein APETALA 3 (232 aa).

The MADS-box domain maps to R3–Y57. The stretch at S75–L164 forms a coiled coil. The K-box domain occupies Y84–D174.

As to quaternary structure, forms a heterodimer with PISTILLATA, capable of binding to CArG-box sequences. AP3/PI heterodimer binds AP1 or SEP3 to form complexes. As to expression, expressed in petals and stamens.

It localises to the nucleus. In terms of biological role, probable transcription factor involved in the genetic control of flower development. Is required for normal development of petals and stamens in the wild-type flower. Forms a heterodimer with PISTILLATA that is required for autoregulation of both AP3 and PI genes. AP3/PI heterodimer interacts with APETALA1 or SEPALLATA3 to form a ternary complex that could be responsible for the regulation of the genes involved in the flower development. AP3/PI heterodimer activates the expression of NAP. AP3/PI prevents GATA22/GNL and GATA21/GNC expression. This Arabidopsis thaliana (Mouse-ear cress) protein is Floral homeotic protein APETALA 3 (AP3).